The sequence spans 146 residues: MSKPVKIGPWGGNGGSERDVQPKPIRMVSMTVSSGAIVDAIAFTYVGTDNVQHSSGIKWGGTGGTEDTINLDATNYVTEISGTVGKFGTDDIVTSLKIITSKGVTRTYGSGTGIPFRVPVLDGGKIAGFFGRAGAFLDAIGFYITP.

Residues 1 to 21 (MSKPVKIGPWGGNGGSERDVQ) form a disordered region. The Jacalin-type lectin domain maps to 4-146 (PVKIGPWGGN…LDAIGFYITP (143 aa)).

Belongs to the jacalin lectin family.

It is found in the secreted. The protein resides in the extracellular space. Its subcellular location is the apoplast. Mannose-specific lectin. Has a weak agglutinating activity against rabbit erythrocytes. The polypeptide is Horcolin (Hordeum vulgare (Barley)).